The primary structure comprises 232 residues: Ubiquinone biosynthesis O-methyltransferase (232 aa).

S-adenosyl-L-methionine is bound by residues R36, G55, D76, and M120.

Belongs to the methyltransferase superfamily. UbiG/COQ3 family.

It carries out the reaction a 3-demethylubiquinol + S-adenosyl-L-methionine = a ubiquinol + S-adenosyl-L-homocysteine + H(+). The enzyme catalyses a 3-(all-trans-polyprenyl)benzene-1,2-diol + S-adenosyl-L-methionine = a 2-methoxy-6-(all-trans-polyprenyl)phenol + S-adenosyl-L-homocysteine + H(+). It functions in the pathway cofactor biosynthesis; ubiquinone biosynthesis. Its function is as follows. O-methyltransferase that catalyzes the 2 O-methylation steps in the ubiquinone biosynthetic pathway. In Paraburkholderia xenovorans (strain LB400), this protein is Ubiquinone biosynthesis O-methyltransferase.